Reading from the N-terminus, the 459-residue chain is Zinc finger protein 213 (459 aa).

Positions 45–126 (RQRFRQFCYG…VALVEDLQKQ (82 aa)) constitute an SCAN box domain. The segment at 128-188 (VKAWRQDVPS…ALLKEGRPGE (61 aa)) is disordered. Positions 202-292 (VALGDIPFYF…ENRPRAALGP (91 aa)) constitute a KRAB domain. 5 consecutive C2H2-type zinc fingers follow at residues 317 to 339 (HSCGQCGKRFRWGSDLARHQRTH), 345 to 367 (HKCPECDKSFRSSSDLVRHQGVH), 373 to 395 (FSCSECGKSFSRSAYLADHQRIH), 401 to 423 (FGCSDCGKSFSLRSYLLDHRRVH), and 429 to 451 (FGCGECDKSFKQRAHLIAHQSLH).

It belongs to the krueppel C2H2-type zinc-finger protein family. In terms of tissue distribution, widely expressed with highest levels in testis.

It localises to the nucleus. In terms of biological role, may be involved in transcriptional regulation. This is Zinc finger protein 213 (ZNF213) from Homo sapiens (Human).